Consider the following 380-residue polypeptide: Alanine racemase (380 aa).

Lysine 41 (proton acceptor; specific for D-alanine) is an active-site residue. N6-(pyridoxal phosphate)lysine is present on lysine 41. Arginine 141 contacts substrate. Residue tyrosine 271 is the Proton acceptor; specific for L-alanine of the active site. Methionine 318 contacts substrate.

The protein belongs to the alanine racemase family. Requires pyridoxal 5'-phosphate as cofactor.

The catalysed reaction is L-alanine = D-alanine. Its pathway is amino-acid biosynthesis; D-alanine biosynthesis; D-alanine from L-alanine: step 1/1. Catalyzes the interconversion of L-alanine and D-alanine. May also act on other amino acids. In Latilactobacillus sakei subsp. sakei (strain 23K) (Lactobacillus sakei subsp. sakei), this protein is Alanine racemase (alr).